Here is a 415-residue protein sequence, read N- to C-terminus: Transcriptional regulator fogI (415 aa).

The zn(2)-C6 fungal-type DNA-binding region spans 12-39 (CNACNESKVRCSQTKPTCARCERNKTTC). Residues 50–153 (DAPPISLSHS…ILSPANLDLP (104 aa)) are disordered. 2 stretches are compositionally biased toward low complexity: residues 80 to 102 (VHIP…STTT) and 123 to 135 (QFFA…HQQP).

The protein resides in the nucleus. In terms of biological role, transcriptional regulator that postively regulates the expression of the gene cluster that mediates the biosynthesis of flavoglaucin and congeners (including aspergin, dihydroauroglaucin and auroglaucin), prenylated salicylaldehyde derivatives carrying a saturated or an unsaturated C-7 side chain. The polypeptide is Transcriptional regulator fogI (Aspergillus ruber (strain CBS 135680)).